Here is a 165-residue protein sequence, read N- to C-terminus: Protein eva-1 homolog B (165 aa).

The chain crosses the membrane as a helical span at residues 29-49; that stretch reads GLYFVLGVCFGLLLTLCLLVI. Disordered regions lie at residues 57–109 and 143–165; these read PRPR…GPLN and LLGT…MHYY. Residues 74–84 show a composition bias toward acidic residues; that stretch reads EPEDDDEDEED. 3 positions are modified to phosphothreonine: T85, T148, and T158.

The protein belongs to the EVA1 family.

Its subcellular location is the membrane. In Homo sapiens (Human), this protein is Protein eva-1 homolog B (EVA1B).